The following is a 534-amino-acid chain: 5,6-dihydroxyindole-2-carboxylic acid oxidase (534 aa).

The first 23 residues, 1–23 (MLGPATFLPLTAALLLLIPGGRA), serve as a signal peptide directing secretion. Over 24–477 (QFPRQCVTPE…WPSRALNFTE (454 aa)) the chain is Lumenal, melanosome. Cystine bridges form between Cys-29-Cys-40, Cys-41-Cys-65, Cys-56-Cys-99, Cys-101-Cys-110, and Cys-113-Cys-122. N-linked (GlcNAc...) asparagine glycosylation is found at Asn-96 and Asn-104. N-linked (GlcNAc...) asparagine glycosylation is found at Asn-175 and Asn-181. Zn(2+)-binding residues include His-192, His-215, and His-224. Intrachain disulfides connect Cys-258–Cys-261 and Cys-290–Cys-303. Residues Asn-304 and Asn-350 are each glycosylated (N-linked (GlcNAc...) asparagine). Residues His-377 and His-381 each coordinate Zn(2+). A glycan (N-linked (GlcNAc...) asparagine) is linked at Asn-385. Zn(2+) is bound at residue His-404. Residues 478 to 501 (IITIAVVAALVLVAVIFAAASCAV) traverse the membrane as a helical segment. Residues 502–534 (HRSRKDDVHQPLLGEQYPRYSEEYERDASQSAV) are Cytoplasmic-facing.

This sequence belongs to the tyrosinase family. The cofactor is Cu(2+). Zn(2+) is required as a cofactor.

It is found in the melanosome membrane. It catalyses the reaction 2 5,6-dihydroxyindole-2-carboxylate + O2 = 2 indole-5,6-quinone-2-carboxylate + 2 H2O. It participates in pigment biosynthesis; melanin biosynthesis. Its function is as follows. Plays a role in melanin biosynthesis. Catalyzes the oxidation of 5,6-dihydroxyindole-2-carboxylic acid (DHICA) into indole-5,6-quinone-2-carboxylic acid. May regulate or influence the type of melanin synthesized. Also to a lower extent, capable of hydroxylating tyrosine and producing melanin. This is 5,6-dihydroxyindole-2-carboxylic acid oxidase (TYRP1) from Ambystoma mexicanum (Axolotl).